Here is an 83-residue protein sequence, read N- to C-terminus: Cytochrome b559 subunit alpha (83 aa).

A helical membrane pass occupies residues valine 21–tryptophan 35. Histidine 23 contacts heme.

The protein belongs to the PsbE/PsbF family. As to quaternary structure, heterodimer of an alpha subunit and a beta subunit. PSII is composed of 1 copy each of membrane proteins PsbA, PsbB, PsbC, PsbD, PsbE, PsbF, PsbH, PsbI, PsbJ, PsbK, PsbL, PsbM, PsbT, PsbX, PsbY, PsbZ, Psb30/Ycf12, at least 3 peripheral proteins of the oxygen-evolving complex and a large number of cofactors. It forms dimeric complexes. The cofactor is heme b.

The protein resides in the plastid. It is found in the chloroplast thylakoid membrane. Its function is as follows. This b-type cytochrome is tightly associated with the reaction center of photosystem II (PSII). PSII is a light-driven water:plastoquinone oxidoreductase that uses light energy to abstract electrons from H(2)O, generating O(2) and a proton gradient subsequently used for ATP formation. It consists of a core antenna complex that captures photons, and an electron transfer chain that converts photonic excitation into a charge separation. The polypeptide is Cytochrome b559 subunit alpha (Acorus calamus (Sweet flag)).